Here is a 331-residue protein sequence, read N- to C-terminus: DNA fragmentation factor subunit alpha (331 aa).

N-acetylmethionine is present on M1. A CIDE-N domain is found at 17–96 (PLKPCLLRRN…ALACNEKWIY (80 aa)). At T243 the chain carries Phosphothreonine. The tract at residues 306–331 (LRNLSARRSPLPGEPQRPKRAKRDSS) is disordered.

In terms of assembly, heterodimer of DFFA and DFFB. Post-translationally, caspase-3 cleaves DFF45 at 2 sites to generate an active factor.

It is found in the cytoplasm. Functionally, inhibitor of the caspase-activated DNase (DFF40). The sequence is that of DNA fragmentation factor subunit alpha (Dffa) from Mus musculus (Mouse).